The sequence spans 88 residues: Cell division topological specificity factor (88 aa).

It belongs to the MinE family.

Its function is as follows. Prevents the cell division inhibition by proteins MinC and MinD at internal division sites while permitting inhibition at polar sites. This ensures cell division at the proper site by restricting the formation of a division septum at the midpoint of the long axis of the cell. The polypeptide is Cell division topological specificity factor (Carboxydothermus hydrogenoformans (strain ATCC BAA-161 / DSM 6008 / Z-2901)).